The chain runs to 395 residues: Altered inheritance of mitochondria protein 39, mitochondrial (395 aa).

Residues 156–176 traverse the membrane as a helical segment; that stretch reads QIWSAIFGGIFGVILGYSLIY.

It belongs to the AIM39 family.

The protein localises to the mitochondrion membrane. The polypeptide is Altered inheritance of mitochondria protein 39, mitochondrial (AIM39) (Saccharomyces cerevisiae (strain ATCC 204508 / S288c) (Baker's yeast)).